The following is a 399-amino-acid chain: Succinate--CoA ligase [ADP-forming] subunit beta (399 aa).

Residues 9-254 (KAVLAEFGVA…ESEEDPKEIE (246 aa)) form the ATP-grasp domain. ATP-binding positions include Lys-46, 53–55 (GRG), Glu-109, Ala-112, and Glu-117. 2 residues coordinate Mg(2+): Asn-209 and Asp-223. Substrate-binding positions include Asn-274 and 331–333 (GIM).

The protein belongs to the succinate/malate CoA ligase beta subunit family. As to quaternary structure, heterotetramer of two alpha and two beta subunits. The cofactor is Mg(2+).

It catalyses the reaction succinate + ATP + CoA = succinyl-CoA + ADP + phosphate. The enzyme catalyses GTP + succinate + CoA = succinyl-CoA + GDP + phosphate. Its pathway is carbohydrate metabolism; tricarboxylic acid cycle; succinate from succinyl-CoA (ligase route): step 1/1. In terms of biological role, succinyl-CoA synthetase functions in the citric acid cycle (TCA), coupling the hydrolysis of succinyl-CoA to the synthesis of either ATP or GTP and thus represents the only step of substrate-level phosphorylation in the TCA. The beta subunit provides nucleotide specificity of the enzyme and binds the substrate succinate, while the binding sites for coenzyme A and phosphate are found in the alpha subunit. This chain is Succinate--CoA ligase [ADP-forming] subunit beta, found in Phenylobacterium zucineum (strain HLK1).